We begin with the raw amino-acid sequence, 92 residues long: Small ribosomal subunit protein bS16 (92 aa).

It belongs to the bacterial ribosomal protein bS16 family.

The sequence is that of Small ribosomal subunit protein bS16 from Desulforudis audaxviator (strain MP104C).